Consider the following 194-residue polypeptide: dITP/XTP pyrophosphatase (194 aa).

8-13 (TNNPHK) lines the substrate pocket. Asp-69 acts as the Proton acceptor in catalysis. A Mg(2+)-binding site is contributed by Asp-69. Substrate contacts are provided by residues Thr-70, 150–153 (FGYD), Lys-173, and 178–179 (HR).

The protein belongs to the HAM1 NTPase family. As to quaternary structure, homodimer. It depends on Mg(2+) as a cofactor.

It carries out the reaction XTP + H2O = XMP + diphosphate + H(+). The enzyme catalyses dITP + H2O = dIMP + diphosphate + H(+). The catalysed reaction is ITP + H2O = IMP + diphosphate + H(+). In terms of biological role, pyrophosphatase that catalyzes the hydrolysis of nucleoside triphosphates to their monophosphate derivatives, with a high preference for the non-canonical purine nucleotides XTP (xanthosine triphosphate), dITP (deoxyinosine triphosphate) and ITP. Seems to function as a house-cleaning enzyme that removes non-canonical purine nucleotides from the nucleotide pool, thus preventing their incorporation into DNA/RNA and avoiding chromosomal lesions. In Porphyromonas gingivalis (strain ATCC BAA-308 / W83), this protein is dITP/XTP pyrophosphatase.